Reading from the N-terminus, the 308-residue chain is D-alanine--D-alanine ligase (308 aa).

The ATP-grasp domain maps to 102–302; it reads KKVAAAAGIP…FGDLVSWMVE (201 aa). Residue 128-183 participates in ATP binding; the sequence is PLQPPYVVKPVREGSSFGVVIVKEDQSHPPQILTSSEWPFGNQVMVERYIHGRELT. 3 residues coordinate Mg(2+): D252, E269, and N271.

The protein belongs to the D-alanine--D-alanine ligase family. Mg(2+) is required as a cofactor. Requires Mn(2+) as cofactor.

It is found in the cytoplasm. The catalysed reaction is 2 D-alanine + ATP = D-alanyl-D-alanine + ADP + phosphate + H(+). Its pathway is cell wall biogenesis; peptidoglycan biosynthesis. In terms of biological role, cell wall formation. The polypeptide is D-alanine--D-alanine ligase (Agrobacterium fabrum (strain C58 / ATCC 33970) (Agrobacterium tumefaciens (strain C58))).